The chain runs to 162 residues: Phosphopantetheine adenylyltransferase (162 aa).

Serine 9 lines the substrate pocket. ATP is bound by residues 9-10 (SF) and histidine 17. Positions 41, 73, and 87 each coordinate substrate. Residues 88–90 (GLR), glutamate 98, and 122–128 (YSFLSSS) each bind ATP.

Belongs to the bacterial CoaD family. As to quaternary structure, homohexamer. The cofactor is Mg(2+).

Its subcellular location is the cytoplasm. It carries out the reaction (R)-4'-phosphopantetheine + ATP + H(+) = 3'-dephospho-CoA + diphosphate. The protein operates within cofactor biosynthesis; coenzyme A biosynthesis; CoA from (R)-pantothenate: step 4/5. Reversibly transfers an adenylyl group from ATP to 4'-phosphopantetheine, yielding dephospho-CoA (dPCoA) and pyrophosphate. This Salinispora tropica (strain ATCC BAA-916 / DSM 44818 / JCM 13857 / NBRC 105044 / CNB-440) protein is Phosphopantetheine adenylyltransferase.